Consider the following 254-residue polypeptide: tRNA (guanine-N(7)-)-methyltransferase (254 aa).

S-adenosyl-L-methionine-binding residues include glutamate 82, glutamate 107, aspartate 134, and aspartate 157. Residue aspartate 157 is part of the active site. Substrate is bound by residues lysine 161, aspartate 193, and 233–236 (TKFE).

Belongs to the class I-like SAM-binding methyltransferase superfamily. TrmB family.

It carries out the reaction guanosine(46) in tRNA + S-adenosyl-L-methionine = N(7)-methylguanosine(46) in tRNA + S-adenosyl-L-homocysteine. The protein operates within tRNA modification; N(7)-methylguanine-tRNA biosynthesis. Its function is as follows. Catalyzes the formation of N(7)-methylguanine at position 46 (m7G46) in tRNA. The chain is tRNA (guanine-N(7)-)-methyltransferase from Corynebacterium jeikeium (strain K411).